Reading from the N-terminus, the 345-residue chain is Fructose-bisphosphate aldolase (345 aa).

S53 provides a ligand contact to D-glyceraldehyde 3-phosphate. Residue D95 is the Proton donor of the active site. The Zn(2+) site is built by H96, D131, E161, and H212. G213 contacts dihydroxyacetone phosphate. H252 is a binding site for Zn(2+). Dihydroxyacetone phosphate contacts are provided by residues 253-255 (GGS) and 274-277 (NVDT).

The protein belongs to the class II fructose-bisphosphate aldolase family. Zn(2+) serves as cofactor.

The enzyme catalyses beta-D-fructose 1,6-bisphosphate = D-glyceraldehyde 3-phosphate + dihydroxyacetone phosphate. It functions in the pathway carbohydrate degradation; glycolysis; D-glyceraldehyde 3-phosphate and glycerone phosphate from D-glucose: step 4/4. Functionally, catalyzes the aldol condensation of dihydroxyacetone phosphate (DHAP or glycerone-phosphate) with glyceraldehyde 3-phosphate (G3P) to form fructose 1,6-bisphosphate (FBP) in gluconeogenesis and the reverse reaction in glycolysis. This Mycobacterium leprae (strain TN) protein is Fructose-bisphosphate aldolase (fba).